Here is a 425-residue protein sequence, read N- to C-terminus: Adenylosuccinate synthetase (425 aa).

Residues 12–18 and 40–42 contribute to the GTP site; these read GDEGKGK and GHT. The active-site Proton acceptor is the Asp-13. Positions 13 and 40 each coordinate Mg(2+). Residues 13–16, 38–41, Thr-130, Arg-144, Gln-224, Thr-239, and Arg-301 each bind IMP; these read DEGK and NAGH. Catalysis depends on His-41, which acts as the Proton donor. 297 to 303 contributes to the substrate binding site; that stretch reads TVSNRRR. GTP-binding positions include Arg-303, 329–331, and 411–413; these read KLD and STS.

It belongs to the adenylosuccinate synthetase family. Homodimer. The cofactor is Mg(2+).

The protein localises to the cytoplasm. It catalyses the reaction IMP + L-aspartate + GTP = N(6)-(1,2-dicarboxyethyl)-AMP + GDP + phosphate + 2 H(+). It functions in the pathway purine metabolism; AMP biosynthesis via de novo pathway; AMP from IMP: step 1/2. Functionally, plays an important role in the de novo pathway of purine nucleotide biosynthesis. Catalyzes the first committed step in the biosynthesis of AMP from IMP. The polypeptide is Adenylosuccinate synthetase (Wolbachia pipientis subsp. Culex pipiens (strain wPip)).